A 654-amino-acid polypeptide reads, in one-letter code: Chaperone protein DnaK (654 aa).

Thr-205 carries the post-translational modification Phosphothreonine; by autocatalysis. The interval 592–654 (ELERQMQQIG…EVEILDDKKP (63 aa)) is disordered. Over residues 608 to 621 (AGQSETQSTGPGSY) the composition is skewed to polar residues. Positions 622-636 (QESSNQSSQHQTNNN) are enriched in low complexity.

It belongs to the heat shock protein 70 family.

In terms of biological role, acts as a chaperone. The chain is Chaperone protein DnaK from Protochlamydia amoebophila (strain UWE25).